The sequence spans 338 residues: Lipoate-protein ligase A (338 aa).

The 188-residue stretch at 29-216 folds into the BPL/LPL catalytic domain; it reads PATQRVLFLW…AFFAHYGERV (188 aa). ATP is bound by residues R71, 76–79, and K134; that span reads GAVF. Residue K134 participates in (R)-lipoate binding.

Belongs to the LplA family. As to quaternary structure, monomer.

The protein localises to the cytoplasm. It catalyses the reaction L-lysyl-[lipoyl-carrier protein] + (R)-lipoate + ATP = N(6)-[(R)-lipoyl]-L-lysyl-[lipoyl-carrier protein] + AMP + diphosphate + H(+). It functions in the pathway protein modification; protein lipoylation via exogenous pathway; protein N(6)-(lipoyl)lysine from lipoate: step 1/2. It participates in protein modification; protein lipoylation via exogenous pathway; protein N(6)-(lipoyl)lysine from lipoate: step 2/2. Catalyzes both the ATP-dependent activation of exogenously supplied lipoate to lipoyl-AMP and the transfer of the activated lipoyl onto the lipoyl domains of lipoate-dependent enzymes. The chain is Lipoate-protein ligase A from Escherichia coli O139:H28 (strain E24377A / ETEC).